The following is a 155-amino-acid chain: MIVKYIKGDIVALFAEGKNIAHGCNCFHTMGSGVAGQLTKAFPKILEADKLQTEWGDVTKLGSYSVYEKYFRTHKAYCFNLYTQFQPGPNFEYSALMNCMLELNEFGENKLIKPTIYMPRIGAGIGKGNWDIIEGILDTYSSKLEIVIVDWEPLL.

The 155-residue stretch at 1–155 (MIVKYIKGDI…IVIVDWEPLL (155 aa)) folds into the Macro domain.

This is an uncharacterized protein from Escherichia coli (Bacteriophage T4).